Reading from the N-terminus, the 909-residue chain is Zinc finger and BTB domain-containing protein 41 (909 aa).

A BTB domain is found at 88–152 (CDLLIIVEGK…LYTSEFFVYK (65 aa)). The C2H2-type 1 zinc-finger motif lies at 207–230 (HQCKFCSRHFCYKKSLENHLAKTH). A disordered region spans residues 252 to 344 (RSKRNRKCPV…PEAGDSVGNV (93 aa)). The span at 266–275 (TSDDEQESGD) shows a compositional bias: acidic residues. Basic and acidic residues predominate over residues 284-295 (NFDKEKSDRNDS). The segment covering 296 to 322 (EDPGSEYNAEEDELEEEMSDEYSDIEE) has biased composition (acidic residues). 13 C2H2-type zinc fingers span residues 361–383 (LQCP…TRVH), 389–411 (FECD…RKKH), 422–445 (HKCP…KRFH), 463–485 (WKCD…MILH), 491–514 (FKCT…EKFH), 518–541 (FPCD…ECTH), 547–569 (WTCF…LRIH), 575–597 (HLCS…LRVH), 603–625 (YECD…KKIH), 631–654 (HQCE…KSVH), 668–690 (HQCD…FRTH), 696–718 (YKCQ…LVIH), and 724–747 (FNCQ…DHVH).

The protein resides in the nucleus. In terms of biological role, may be involved in transcriptional regulation. In Homo sapiens (Human), this protein is Zinc finger and BTB domain-containing protein 41 (ZBTB41).